Consider the following 292-residue polypeptide: Probable vesicular-fusion protein sec17 homolog (292 aa).

The protein belongs to the SNAP family.

Its subcellular location is the membrane. Required for vesicular transport between the endoplasmic reticulum and the Golgi apparatus. The polypeptide is Probable vesicular-fusion protein sec17 homolog (Neurospora crassa (strain ATCC 24698 / 74-OR23-1A / CBS 708.71 / DSM 1257 / FGSC 987)).